The primary structure comprises 233 residues: Purine nucleoside phosphorylase DeoD-type (233 aa).

His4 is a binding site for a purine D-ribonucleoside. Phosphate-binding positions include Gly20, Arg24, Arg43, and 87–90 (RVGT). A purine D-ribonucleoside-binding positions include 179-181 (EME) and 203-204 (SD). Catalysis depends on Asp204, which acts as the Proton donor.

Belongs to the PNP/UDP phosphorylase family. Homohexamer; trimer of homodimers.

It catalyses the reaction a purine D-ribonucleoside + phosphate = a purine nucleobase + alpha-D-ribose 1-phosphate. The catalysed reaction is a purine 2'-deoxy-D-ribonucleoside + phosphate = a purine nucleobase + 2-deoxy-alpha-D-ribose 1-phosphate. Functionally, catalyzes the reversible phosphorolytic breakdown of the N-glycosidic bond in the beta-(deoxy)ribonucleoside molecules, with the formation of the corresponding free purine bases and pentose-1-phosphate. This Clostridium novyi (strain NT) protein is Purine nucleoside phosphorylase DeoD-type.